We begin with the raw amino-acid sequence, 285 residues long: MEIIIISGRSGAGKSVALRALEDTGYYCVDNIPLDLLPQLTDILSQSQSSVAISLDIRNIPSSANSLEQTLSTLQKHHQIKIIFLEADRATLIRRYSDSRRLHPLSLKDLSLEAAIDEEYRYLEPLIQHANLILDTTHLSTHILAERLREFLRDNSEKELKIIVESFGFKYGIPLDADYVFDVRFLPNPHWDPTLRPMTGLEAPVAEFLNSHTEVNEFIYLTRHYIDTWLPMLEKNNRSYLTIAIGCTGGKHRSVYIAQQLGEYFQAKGKTVQIQHKSLERNKKI.

Glycine 8–serine 15 contacts ATP. Aspartate 56 to asparagine 59 is a binding site for GTP.

It belongs to the RapZ-like family.

Its function is as follows. Displays ATPase and GTPase activities. This Haemophilus influenzae (strain 86-028NP) protein is Nucleotide-binding protein NTHI1314.